The chain runs to 196 residues: UMP-CMP kinase (196 aa).

Residue 13-18 coordinates ATP; it reads GAGKGT. S33 bears the Phosphoserine mark. Residues 33–63 form an NMP region; sequence SAGELLRDERKNPDSQYGELIEKYIKEGKIV. R39 lines the a ribonucleoside 5'-phosphate pocket. K43 and K55 each carry N6-acetyllysine. Residue 61–63 participates in a ribonucleoside 5'-phosphate binding; the sequence is KIV. K73 participates in a covalent cross-link: Glycyl lysine isopeptide (Lys-Gly) (interchain with G-Cter in SUMO2). A ribonucleoside 5'-phosphate is bound at residue 93 to 96; sequence GFPR. CMP is bound at residue N100. K106 is modified (N6-succinyllysine). Residues 133–143 form an LID region; the sequence is ERGKSSGRSDD. ATP is bound at residue R134. The a ribonucleoside 5'-phosphate site is built by R140 and R151. K179 serves as a coordination point for ATP. S180 carries the post-translational modification Phosphoserine.

This sequence belongs to the adenylate kinase family. UMP-CMP kinase subfamily. In terms of assembly, monomer. The cofactor is Mg(2+).

It is found in the nucleus. The protein resides in the cytoplasm. The catalysed reaction is CMP + ATP = CDP + ADP. It catalyses the reaction dCMP + ATP = dCDP + ADP. It carries out the reaction UMP + ATP = UDP + ADP. The enzyme catalyses a 2'-deoxyribonucleoside 5'-diphosphate + ATP = a 2'-deoxyribonucleoside 5'-triphosphate + ADP. The catalysed reaction is a ribonucleoside 5'-diphosphate + ATP = a ribonucleoside 5'-triphosphate + ADP. Its function is as follows. Catalyzes the phosphorylation of pyrimidine nucleoside monophosphates at the expense of ATP. Plays an important role in de novo pyrimidine nucleotide biosynthesis. Has preference for UMP and CMP as phosphate acceptors. Also displays broad nucleoside diphosphate kinase activity. This chain is UMP-CMP kinase (Cmpk1), found in Mus musculus (Mouse).